The chain runs to 231 residues: Ribonuclease P protein component 3 (231 aa).

The protein belongs to the eukaryotic/archaeal RNase P protein component 3 family. As to quaternary structure, consists of a catalytic RNA component and at least 4-5 protein subunits.

The protein resides in the cytoplasm. It catalyses the reaction Endonucleolytic cleavage of RNA, removing 5'-extranucleotides from tRNA precursor.. Functionally, part of ribonuclease P, a protein complex that generates mature tRNA molecules by cleaving their 5'-ends. The polypeptide is Ribonuclease P protein component 3 (Methanococcus maripaludis (strain C5 / ATCC BAA-1333)).